We begin with the raw amino-acid sequence, 116 residues long: NADH-ubiquinone oxidoreductase chain 3 (116 aa).

The next 3 membrane-spanning stretches (helical) occupy residues 3–23, 56–76, and 85–105; these read LITTIIAITITLSAVLATVSF, FFLIAILFLLFDLEIALLLPL, and PALTLAWSAAVLALLTLGLIY.

It belongs to the complex I subunit 3 family.

Its subcellular location is the mitochondrion membrane. It carries out the reaction a ubiquinone + NADH + 5 H(+)(in) = a ubiquinol + NAD(+) + 4 H(+)(out). Its function is as follows. Core subunit of the mitochondrial membrane respiratory chain NADH dehydrogenase (Complex I) that is believed to belong to the minimal assembly required for catalysis. Complex I functions in the transfer of electrons from NADH to the respiratory chain. The immediate electron acceptor for the enzyme is believed to be ubiquinone. This chain is NADH-ubiquinone oxidoreductase chain 3 (MT-ND3), found in Salmo trutta (Brown trout).